The following is a 71-amino-acid chain: MGRKKESFENMLEKLETIVNSMDNGEITLEDSMKSYEEGIKLCNKLYKVLKDAEGKIKILEDNKEEDFENS.

This sequence belongs to the XseB family. In terms of assembly, heterooligomer composed of large and small subunits.

It is found in the cytoplasm. It carries out the reaction Exonucleolytic cleavage in either 5'- to 3'- or 3'- to 5'-direction to yield nucleoside 5'-phosphates.. Functionally, bidirectionally degrades single-stranded DNA into large acid-insoluble oligonucleotides, which are then degraded further into small acid-soluble oligonucleotides. The sequence is that of Exodeoxyribonuclease 7 small subunit from Clostridium botulinum (strain Loch Maree / Type A3).